We begin with the raw amino-acid sequence, 247 residues long: 2,3-bisphosphoglycerate-dependent phosphoglycerate mutase (247 aa).

Residues 8–15 (RHGESVWN), 21–22 (TG), Arg-60, 87–90 (ERHY), Lys-98, 114–115 (RR), and 183–184 (GN) each bind substrate. His-9 acts as the Tele-phosphohistidine intermediate in catalysis. Catalysis depends on Glu-87, which acts as the Proton donor/acceptor.

Belongs to the phosphoglycerate mutase family. BPG-dependent PGAM subfamily. As to quaternary structure, homodimer.

The catalysed reaction is (2R)-2-phosphoglycerate = (2R)-3-phosphoglycerate. It participates in carbohydrate degradation; glycolysis; pyruvate from D-glyceraldehyde 3-phosphate: step 3/5. In terms of biological role, catalyzes the interconversion of 2-phosphoglycerate and 3-phosphoglycerate. The sequence is that of 2,3-bisphosphoglycerate-dependent phosphoglycerate mutase from Geobacter metallireducens (strain ATCC 53774 / DSM 7210 / GS-15).